A 194-amino-acid polypeptide reads, in one-letter code: ATP-dependent Clp protease proteolytic subunit (194 aa).

Catalysis depends on S99, which acts as the Nucleophile. Residue H124 is part of the active site.

This sequence belongs to the peptidase S14 family. In terms of assembly, fourteen ClpP subunits assemble into 2 heptameric rings which stack back to back to give a disk-like structure with a central cavity, resembling the structure of eukaryotic proteasomes.

It is found in the cytoplasm. It catalyses the reaction Hydrolysis of proteins to small peptides in the presence of ATP and magnesium. alpha-casein is the usual test substrate. In the absence of ATP, only oligopeptides shorter than five residues are hydrolyzed (such as succinyl-Leu-Tyr-|-NHMec, and Leu-Tyr-Leu-|-Tyr-Trp, in which cleavage of the -Tyr-|-Leu- and -Tyr-|-Trp bonds also occurs).. Its function is as follows. Cleaves peptides in various proteins in a process that requires ATP hydrolysis. Has a chymotrypsin-like activity. Plays a major role in the degradation of misfolded proteins. This Borrelia garinii subsp. bavariensis (strain ATCC BAA-2496 / DSM 23469 / PBi) (Borreliella bavariensis) protein is ATP-dependent Clp protease proteolytic subunit.